Here is a 900-residue protein sequence, read N- to C-terminus: Protein translocase subunit SecA (900 aa).

ATP-binding positions include glutamine 87, 105–109, and aspartate 512; that span reads GEGKT. The tract at residues 849–900 is disordered; it reads ERLAQQQQFSHQEEDSLNTGSPAQADRKIGRNDPCPCGSGKKYKQCHGRLQK. Zn(2+)-binding residues include cysteine 883, cysteine 885, cysteine 894, and histidine 895. Residues 889 to 900 show a composition bias toward basic residues; the sequence is KKYKQCHGRLQK.

This sequence belongs to the SecA family. In terms of assembly, monomer and homodimer. Part of the essential Sec protein translocation apparatus which comprises SecA, SecYEG and auxiliary proteins SecDF-YajC and YidC. The cofactor is Zn(2+).

The protein localises to the cell inner membrane. It localises to the cytoplasm. The catalysed reaction is ATP + H2O + cellular proteinSide 1 = ADP + phosphate + cellular proteinSide 2.. Its function is as follows. Part of the Sec protein translocase complex. Interacts with the SecYEG preprotein conducting channel. Has a central role in coupling the hydrolysis of ATP to the transfer of proteins into and across the cell membrane, serving both as a receptor for the preprotein-SecB complex and as an ATP-driven molecular motor driving the stepwise translocation of polypeptide chains across the membrane. This Pectobacterium atrosepticum (strain SCRI 1043 / ATCC BAA-672) (Erwinia carotovora subsp. atroseptica) protein is Protein translocase subunit SecA.